The sequence spans 66 residues: Phylloseptin-S3 (66 aa).

An N-terminal signal peptide occupies residues 1–22; that stretch reads MAFLKKSLFLVLFLGLVSLSIC. Residues 23–46 constitute a propeptide that is removed on maturation; the sequence is EEEKRETEEEEHDQEEDDKSEEKR. The segment at 25–44 is disordered; that stretch reads EKRETEEEEHDQEEDDKSEE. Acidic residues predominate over residues 30 to 41; that stretch reads EEEEHDQEEDDK. A Phenylalanine amide modification is found at phenylalanine 65.

It belongs to the frog skin active peptide (FSAP) family. Phylloseptin subfamily. Expressed by the skin glands.

It localises to the secreted. The protein resides in the target cell membrane. Its function is as follows. Antimicrobial peptide with activity against the Gram-positive S.pyogenes (MIC=12.5 uM), but not against all other bacteria tested (both Gram-positive and Gram-negative). Does not show activity against fungi, and against Leishmania species. The chain is Phylloseptin-S3 from Phyllomedusa sauvagei (Sauvage's leaf frog).